The following is a 507-amino-acid chain: MLATRNLVPIIRASIKWRIKLSALHYCMSDAETSEALLEDNSAYINNEKHNLFLEKIFSDYQPFKHDNRTQVSCSQHMRDYRPLLTLSSATRSVLFSLLASDMSIILSISPNTGILLCIGHLLASDIEDVVIVLSRGSPLVDLASTRIFKLAQNGTLRFAIKRTTFQELRFLRKSKDENVMEAATRGIITIRQLYYENKVLPLRFTGNVATHIEENLEFEEQITWRTHVDSSIFPNTRCAYPSGYGPSAKIPCLSHKPNDILAYTGSTLVGRVVSKLAPEQVMKKVTLESGGKSTMAVFIQHDVTWAVENTQFGVFDRQGQCCIAQSGYTVHRSTLSQIVENNLEKDPSYVLHVDTESDIRGPFILKIHFESIPRRINSAKAENSKVLCGGPRENSVYLYPTLSATLTDECRIMKEEVFAPIITILCVKTVDEAIQRGNNSKFGLAAYVTKENVHGIILSTALKTVKLFIICVHLASYQIPFGGNKNSGMGAELGKRALENYTEGNH.

Residues 1-21 constitute a mitochondrion transit peptide; that stretch reads MLATRNLVPIIRASIKWRIKL. 266 to 271 serves as a coordination point for NAD(+); it reads GSTLVG. Catalysis depends on residues Glu289 and Cys323.

The protein belongs to the aldehyde dehydrogenase family. As to quaternary structure, homotetramer.

The protein localises to the mitochondrion matrix. It carries out the reaction an aldehyde + NAD(+) + H2O = a carboxylate + NADH + 2 H(+). Its pathway is alcohol metabolism; ethanol degradation; acetate from ethanol: step 2/2. In Saccharomyces cerevisiae (Baker's yeast), this protein is Aldehyde dehydrogenase 1, mitochondrial (ALD1).